The chain runs to 130 residues: Small ribosomal subunit protein uS11 (130 aa).

It belongs to the universal ribosomal protein uS11 family. As to quaternary structure, part of the 30S ribosomal subunit. Interacts with proteins S7 and S18. Binds to IF-3.

Located on the platform of the 30S subunit, it bridges several disparate RNA helices of the 16S rRNA. Forms part of the Shine-Dalgarno cleft in the 70S ribosome. This chain is Small ribosomal subunit protein uS11, found in Prochlorococcus marinus (strain MIT 9312).